Reading from the N-terminus, the 259-residue chain is tRNA (guanine-N(7)-)-methyltransferase (259 aa).

S-adenosyl-L-methionine is bound by residues Gly-80, 103 to 104 (EL), 136 to 137 (NS), and Leu-156. Asp-159 is a catalytic residue. 234–236 (TEE) is a binding site for S-adenosyl-L-methionine.

Belongs to the class I-like SAM-binding methyltransferase superfamily. TrmB family.

The protein localises to the nucleus. The catalysed reaction is guanosine(46) in tRNA + S-adenosyl-L-methionine = N(7)-methylguanosine(46) in tRNA + S-adenosyl-L-homocysteine. It participates in tRNA modification; N(7)-methylguanine-tRNA biosynthesis. Catalyzes the formation of N(7)-methylguanine at position 46 (m7G46) in tRNA. This Oryza sativa subsp. indica (Rice) protein is tRNA (guanine-N(7)-)-methyltransferase.